Here is a 153-residue protein sequence, read N- to C-terminus: Endoribonuclease RegB (153 aa).

Activity is stimulated 10- to 100-fold by host ribosomal protein S1, which also helps confer substrate choice. In terms of biological role, essential to the early nucleolytic processing of a number of T4 messenger RNAs. Specifically cleaves after the GG dinucleotide GGAG within consensus 5'-GGAGRAYARAA-3' (R is a purine and Y is a pyrimidine) sequences found mainly in translation initiation sites. The polypeptide is Endoribonuclease RegB (regB) (Enterobacteria phage T4 (Bacteriophage T4)).